The chain runs to 612 residues: DNA mismatch repair protein MutL (612 aa).

The protein belongs to the DNA mismatch repair MutL/HexB family.

Its function is as follows. This protein is involved in the repair of mismatches in DNA. It is required for dam-dependent methyl-directed DNA mismatch repair. May act as a 'molecular matchmaker', a protein that promotes the formation of a stable complex between two or more DNA-binding proteins in an ATP-dependent manner without itself being part of a final effector complex. The sequence is that of DNA mismatch repair protein MutL from Herminiimonas arsenicoxydans.